Consider the following 803-residue polypeptide: MIPVTEFRQFSEQQPAFRVLKPWWDVFTDYLSVAMLMIGVFGCTLQVMQDKIICLPKRVQPAQNHSSLSNVSQAVASTTPLPPPKPSPANPITVEMKGLKTDLDLQQYSFINQMCYERALHWYAKYFPYLVLIHTLVFMLCSNFWFKFPGSSSKIEHFISILGKCFDSPWTTRALSEVSGEDSEEKDNRKNNMNRSNTIQSGPEDSLVNSQSLKSIPEKFVVDKSTAGALDKKEGEQAKALFEKVKKFRLHVEEGDILYAMYVRQTVLKVIKFLIIIAYNSALVSKVQFTVDCNVDIQDMTGYKNFSCNHTMAHLFSKLSFCYLCFVSIYGLTCLYTLYWLFYRSLREYSFEYVRQETGIDDIPDVKNDFAFMLHMIDQYDPLYSKRFAVFLSEVSENKLKQLNLNNEWTPDKLRQKLQTNAHNRLELPLIMLSGLPDTVFEITELQSLKLEIIKNVMIPATIAQLDNLQELSLHQCSVKIHSAALSFLKENLKVLSVKFDDMRELPPWMYGLRNLEELYLVGSLSHDISRNVTLESLRDLKSLKILSIKSNVSKIPQAVVDVSSHLQKMCIHNDGTKLVMLNNLKKMTNLTELELVHCDLERIPHAVFSLLSLQELDLKENNLKSIEEIVSFQHLRKLTVLKLWHNSITYIPEHIKKLTSLERLSFSHNKIEVLPSHLFLCNKIRYLDLSYNDIRFIPPEIGVLQSLQYFSITCNKVESLPDELYFCKKLKTLKIGKNSLSVLSPKIGNLLFLSYLDVKGNHFEILPPELGDCRALKRAGLVVEDALFETLPSDVREQMKTE.

Over 1-22 the chain is Cytoplasmic; it reads MIPVTEFRQFSEQQPAFRVLKP. A helical membrane pass occupies residues 23–47; sequence WWDVFTDYLSVAMLMIGVFGCTLQV. The Extracellular portion of the chain corresponds to 48–124; the sequence is MQDKIICLPK…CYERALHWYA (77 aa). 2 disulfides stabilise this stretch: C54-C308 and C115-C293. N64 and N70 each carry an N-linked (GlcNAc...) asparagine glycan. A helical transmembrane segment spans residues 125–144; that stretch reads KYFPYLVLIHTLVFMLCSNF. The Cytoplasmic segment spans residues 145-262; the sequence is WFKFPGSSSK…EEGDILYAMY (118 aa). Residues 177-209 form a disordered region; that stretch reads EVSGEDSEEKDNRKNNMNRSNTIQSGPEDSLVN. A compositionally biased stretch (polar residues) spans 191-209; the sequence is NNMNRSNTIQSGPEDSLVN. Residues S212 and S215 each carry the phosphoserine modification. The helical transmembrane segment at 263–284 threads the bilayer; the sequence is VRQTVLKVIKFLIIIAYNSALV. Over 285-314 the chain is Extracellular; it reads SKVQFTVDCNVDIQDMTGYKNFSCNHTMAH. Residues 315 to 339 traverse the membrane as a helical segment; it reads LFSKLSFCYLCFVSIYGLTCLYTLY. Topologically, residues 340-803 are cytoplasmic; that stretch reads WLFYRSLREY…SDVREQMKTE (464 aa). 17 LRR repeats span residues 397–420, 421–443, 446–466, 467–488, 490–513, 515–537, 541–563, 565–587, 588–611, 613–635, 636–659, 660–682, 684–705, 706–728, 730–751, 753–774, and 776–799; these read ENKLKQLNLNNEWTPDKLRQKLQT, NAHNRLELPLIMLSGLPDTVFEI, LQSLKLEIIKNVMIPATIAQL, DNLQELSLHQCSVKIHSAALSF, KENLKVLSVKFDDMRELPPWMYGL, NLEELYLVGSLSHDISRNVTLES, LKSLKILSIKSNVSKIPQAVVDV, SHLQKMCIHNDGTKLVMLNNLKK, MTNLTELELVHCDLERIPHAVFSL, SLQELDLKENNLKSIEEIVSFQH, LRKLTVLKLWHNSITYIPEHIKKL, TSLERLSFSHNKIEVLPSHLFLC, KIRYLDLSYNDIRFIPPEIGVL, QSLQYFSITCNKVESLPDELYFC, KLKTLKIGKNSLSVLSPKIGNL, FLSYLDVKGNHFEILPPELGDC, and ALKRAGLVVEDALFETLPSDVREQ.

Belongs to the LRRC8 family. In terms of assembly, heterohexamer; oligomerizes with other LRRC8 proteins (LRRC8A, LRRC8B, LRRC8D and/or LRRC8E) to form a heterohexamer. Homoheptamer; inactive, likely because it is not targeted to the plasma membrane in the absence of LRRC8A. In vivo, the subunit composition may depend primarily on expression levels, and heterooligomeric channels containing various proportions of the different LRRC8 proteins may coexist. In terms of tissue distribution, expressed at highest levels in skeletal muscle, and at moderate levels in heart, lung and peripheral blood leukocytes.

It localises to the cell membrane. It is found in the endoplasmic reticulum membrane. The enzyme catalyses chloride(in) = chloride(out). The catalysed reaction is iodide(out) = iodide(in). It catalyses the reaction taurine(out) = taurine(in). It carries out the reaction 2',3'-cGAMP(out) = 2',3'-cGAMP(in). In terms of biological role, non-essential component of the volume-regulated anion channel (VRAC, also named VSOAC channel), an anion channel required to maintain a constant cell volume in response to extracellular or intracellular osmotic changes. The VRAC channel conducts iodide better than chloride and can also conduct organic osmolytes like taurine. Plays a redundant role in the efflux of amino acids, such as aspartate and glutamate, in response to osmotic stress. The VRAC channel also mediates transport of immunoreactive cyclic dinucleotide GMP-AMP (2'-3'-cGAMP), an immune messenger produced in response to DNA virus in the cytosol. Channel activity requires LRRC8A plus at least one other family member (LRRC8B, LRRC8C, LRRC8D or LRRC8E); channel characteristics depend on the precise subunit composition. In Homo sapiens (Human), this protein is Volume-regulated anion channel subunit LRRC8C.